The following is a 154-amino-acid chain: Ribosome maturation factor RimP (154 aa).

Belongs to the RimP family.

The protein localises to the cytoplasm. Its function is as follows. Required for maturation of 30S ribosomal subunits. In Carboxydothermus hydrogenoformans (strain ATCC BAA-161 / DSM 6008 / Z-2901), this protein is Ribosome maturation factor RimP.